Consider the following 94-residue polypeptide: Protein S100-A1 (94 aa).

EF-hand domains lie at 13-48 (INVF…FLDV) and 50-85 (KDAD…LTVA). Ca(2+) contacts are provided by Lys28, Glu33, Asp63, Asn65, Asp67, Glu69, and Glu74. At Cys86 the chain carries S-nitrosocysteine.

This sequence belongs to the S-100 family. As to quaternary structure, dimer of either two alpha chains, or two beta chains, or one alpha and one beta chain. Also forms heterodimers with S100P. Interacts with AGER. Interacts with CAPZA1. Interacts with FKBP4. Interacts with RYR1 and RYR2. Interacts with CACYBP in a calcium-dependent manner. Interacts with PPP5C (via TPR repeats); the interaction is calcium-dependent and modulates PPP5C activity. Interacts with ATP2A2 and PLN in a Ca(2+)-dependent manner. Interacts with mitochondrial F1-ATPase subunits ATP5F1A and ATP5F1B; these interactions increase F1-ATPase activity. Post-translationally, glutathionylated; glutathionylation increases affinity to calcium about 10-fold. In terms of tissue distribution, expressed in the cardiac and the skeletal muscles.

Its subcellular location is the cytoplasm. It localises to the sarcoplasmic reticulum. The protein resides in the mitochondrion. Its function is as follows. Small calcium binding protein that plays important roles in several biological processes such as Ca(2+) homeostasis, chondrocyte biology and cardiomyocyte regulation. In response to an increase in intracellular Ca(2+) levels, binds calcium which triggers conformational changes. These changes allow interactions with specific target proteins and modulate their activity. Regulates a network in cardiomyocytes controlling sarcoplasmic reticulum Ca(2+) cycling and mitochondrial function through interaction with the ryanodine receptors RYR1 and RYR2, sarcoplasmic reticulum Ca(2+)-ATPase/ATP2A2 and mitochondrial F1-ATPase. Facilitates diastolic Ca(2+) dissociation and myofilament mechanics in order to improve relaxation during diastole. This chain is Protein S100-A1 (S100a1), found in Mus musculus (Mouse).